A 280-amino-acid polypeptide reads, in one-letter code: 2-dehydro-3-deoxyphosphooctonate aldolase (280 aa).

Belongs to the KdsA family.

The protein resides in the cytoplasm. The catalysed reaction is D-arabinose 5-phosphate + phosphoenolpyruvate + H2O = 3-deoxy-alpha-D-manno-2-octulosonate-8-phosphate + phosphate. It participates in carbohydrate biosynthesis; 3-deoxy-D-manno-octulosonate biosynthesis; 3-deoxy-D-manno-octulosonate from D-ribulose 5-phosphate: step 2/3. Its pathway is bacterial outer membrane biogenesis; lipopolysaccharide biosynthesis. The chain is 2-dehydro-3-deoxyphosphooctonate aldolase from Pseudomonas putida (strain W619).